The following is a 456-amino-acid chain: Bifunctional protein GlmU (456 aa).

The pyrophosphorylase stretch occupies residues 1-229 (MLNNAMSVVI…LSEVEGVNNR (229 aa)). Residues 11-14 (LAAG), K25, Q76, 81-82 (GT), 103-105 (YGD), G140, E154, N169, and N227 each bind UDP-N-acetyl-alpha-D-glucosamine. D105 lines the Mg(2+) pocket. N227 serves as a coordination point for Mg(2+). Residues 230–250 (LQLSRLERVYQSEQAEKLLLA) form a linker region. Residues 251–456 (GVMLRDPARF…EGWRRPVKKK (206 aa)) form an N-acetyltransferase region. R333 and K351 together coordinate UDP-N-acetyl-alpha-D-glucosamine. H363 functions as the Proton acceptor in the catalytic mechanism. Y366 and N377 together coordinate UDP-N-acetyl-alpha-D-glucosamine. Residues A380, 386 to 387 (NY), S405, A423, and R440 contribute to the acetyl-CoA site.

In the N-terminal section; belongs to the N-acetylglucosamine-1-phosphate uridyltransferase family. It in the C-terminal section; belongs to the transferase hexapeptide repeat family. Homotrimer. Mg(2+) is required as a cofactor.

Its subcellular location is the cytoplasm. The enzyme catalyses alpha-D-glucosamine 1-phosphate + acetyl-CoA = N-acetyl-alpha-D-glucosamine 1-phosphate + CoA + H(+). It catalyses the reaction N-acetyl-alpha-D-glucosamine 1-phosphate + UTP + H(+) = UDP-N-acetyl-alpha-D-glucosamine + diphosphate. The protein operates within nucleotide-sugar biosynthesis; UDP-N-acetyl-alpha-D-glucosamine biosynthesis; N-acetyl-alpha-D-glucosamine 1-phosphate from alpha-D-glucosamine 6-phosphate (route II): step 2/2. It participates in nucleotide-sugar biosynthesis; UDP-N-acetyl-alpha-D-glucosamine biosynthesis; UDP-N-acetyl-alpha-D-glucosamine from N-acetyl-alpha-D-glucosamine 1-phosphate: step 1/1. It functions in the pathway bacterial outer membrane biogenesis; LPS lipid A biosynthesis. Functionally, catalyzes the last two sequential reactions in the de novo biosynthetic pathway for UDP-N-acetylglucosamine (UDP-GlcNAc). The C-terminal domain catalyzes the transfer of acetyl group from acetyl coenzyme A to glucosamine-1-phosphate (GlcN-1-P) to produce N-acetylglucosamine-1-phosphate (GlcNAc-1-P), which is converted into UDP-GlcNAc by the transfer of uridine 5-monophosphate (from uridine 5-triphosphate), a reaction catalyzed by the N-terminal domain. This Shigella boydii serotype 4 (strain Sb227) protein is Bifunctional protein GlmU.